We begin with the raw amino-acid sequence, 283 residues long: Elongation factor Ts (283 aa).

The interval 80–83 (TDFV) is involved in Mg(2+) ion dislocation from EF-Tu.

It belongs to the EF-Ts family.

The protein resides in the cytoplasm. In terms of biological role, associates with the EF-Tu.GDP complex and induces the exchange of GDP to GTP. It remains bound to the aminoacyl-tRNA.EF-Tu.GTP complex up to the GTP hydrolysis stage on the ribosome. This Salmonella gallinarum (strain 287/91 / NCTC 13346) protein is Elongation factor Ts.